A 249-amino-acid chain; its full sequence is DNA repair protein RecO (249 aa).

The protein belongs to the RecO family.

In terms of biological role, involved in DNA repair and RecF pathway recombination. This chain is DNA repair protein RecO, found in Afipia carboxidovorans (strain ATCC 49405 / DSM 1227 / KCTC 32145 / OM5) (Oligotropha carboxidovorans).